We begin with the raw amino-acid sequence, 545 residues long: MSNAMFCYQCQETVGNKGCTQVGVCGKKPETAALQDALIYVTKGLGQIATRLRAEGKAVDHRIDRLVTGNLFATITNANFDDDILAERVRMTCAAKKELAASLTDKSGLSDAALWEASEKSAMLAKAGTVGVMATTDDDVRSLRWLITFGLKGMAAYAKHADVLGKHENSLDAFMQEALAKTLDDSLSVADLVALTLETGKFGVSAMALLDAANTGTYGHPEITKVNIGVGSNPGILISGHDLRDLEMLLKQTEGTGVDVYTHSEMLPAHYYPAFKKYAHFKGNYGNAWWKQKEEFESFNGPVLLTTNCLVPPKDSYKDRVYTTGIVGFTGCKHIPGEIGEHKDFSAIIAHAKTCPAPTEIESGEIIGGFAHNQVLALADKVIDAVKSGAIKKFVVMAGCDGRAKSRSYYTDFAEGLPKDTVILTAGCAKYRYNKLNLGDIGGIPRVLDAGQCNDSYSLAVIALKLKEVFGLEDVNDLPIVYNIAWYEQKAVIVLLALLSLGVKNIHLGPTLPAFLSPNVAKVLVEQFNIGGITSPQDDLKAFFG.

Positions 7, 10, 19, and 25 each coordinate [4Fe-4S] cluster. H241, E265, C309, C400, C428, C453, E488, and K490 together coordinate hybrid [4Fe-2O-2S] cluster. The residue at position 400 (C400) is a Cysteine persulfide; in oxidized form.

The protein belongs to the HCP family. Monomer. It depends on [4Fe-4S] cluster as a cofactor. The cofactor is hybrid [4Fe-2O-2S] cluster.

It is found in the cytoplasm. It catalyses the reaction A + NH4(+) + H2O = hydroxylamine + AH2 + H(+). Functionally, catalyzes the reduction of hydroxylamine to form NH(3) and H(2)O. In Desulfovibrio desulfuricans (strain ATCC 27774 / DSM 6949 / MB), this protein is Hydroxylamine reductase.